The sequence spans 296 residues: MSYTKDNDKLYRYLFQNRAVRGEWVRLNDTFTETLNTHQYPKAVQNLLGEMLVATSLLTAIMKFEGTITVQIQGDGPLKLAVVNGNEKQQLRALARTQAEIADNASLSEMIGNGVLVISIMPNDGERYQGVIALDKPTIRECLEDYFIRSEQLQTHLVIRTGEYEGKAVAGGLLLQIMPDSTGTPEDFEHLMTLAETVKDEELFGLEAEELLFRLYHEEQVEVYPPQETEFHCGCSRGRSGNAILLLPMEEIDEMLAEKNGVIDMQCECCGTQYFFDKNAIMEFKQEADKLNQLGL.

2 cysteine pairs are disulfide-bonded: Cys233–Cys235 and Cys267–Cys270.

Belongs to the HSP33 family. Post-translationally, under oxidizing conditions two disulfide bonds are formed involving the reactive cysteines. Under reducing conditions zinc is bound to the reactive cysteines and the protein is inactive.

The protein resides in the cytoplasm. In terms of biological role, redox regulated molecular chaperone. Protects both thermally unfolding and oxidatively damaged proteins from irreversible aggregation. Plays an important role in the bacterial defense system toward oxidative stress. This is 33 kDa chaperonin from Actinobacillus pleuropneumoniae serotype 3 (strain JL03).